Here is a 553-residue protein sequence, read N- to C-terminus: Telomere repeat-binding protein 2 (553 aa).

The disordered stretch occupies residues 147 to 170; it reads SSTEVGACGNGSPNESRDDVNLFS. Residues 285–364 form the Ubiquitin-like domain; that stretch reads VKLRIKSFRV…HLDSLGFSLE (80 aa). The interval 394-413 is disordered; it reads ALDSSHEPEPSPADSFGKLG. One can recognise an HTH myb-type domain in the interval 448–507; sequence AQRRIRRPFSVTEVEALVQAVEKLGTGRWRDVKVRAFEDADHRTYVDLKDKWKTLVHTAR. The H-T-H motif DNA-binding region spans 476–503; it reads WRDVKVRAFEDADHRTYVDLKDKWKTLV.

In terms of assembly, homodimer and heterodimer with TRP1. Interacts with SNL1. Expressed ubiquitously. Highest expression in flowers and leaves.

The protein localises to the nucleus. In terms of biological role, binds specifically to the plant telomeric double-stranded DNA sequences. At least 2 repeats of telomeric sequences are required for binding. Induces DNA bending. In Arabidopsis thaliana (Mouse-ear cress), this protein is Telomere repeat-binding protein 2 (TRP2).